Here is a 276-residue protein sequence, read N- to C-terminus: Digeranylgeranylglyceryl phosphate synthase (276 aa).

8 helical membrane passes run 12-34 (PHNCALAGLVGVLGSMVALGSVP), 38-60 (ILILVFLVVSLGCAGGNTINDYF), 84-104 (ALWYSLFLFAVGLALALLISL), 107-127 (FAFALLAYITMFLYAWKLKPL), 146-166 (GAIAVGKIGLAGTLAVCAFLV), 202-222 (VAAFFGVATVIASFLPVKAGV), 224-244 (VGYYAMVPVDLIILYAVYLIL), and 256-276 (QLLLKASIFLAVFAFLIAALM).

Belongs to the UbiA prenyltransferase family. DGGGP synthase subfamily. It depends on Mg(2+) as a cofactor.

The protein resides in the cell membrane. It carries out the reaction sn-3-O-(geranylgeranyl)glycerol 1-phosphate + (2E,6E,10E)-geranylgeranyl diphosphate = 2,3-bis-O-(geranylgeranyl)-sn-glycerol 1-phosphate + diphosphate. Its pathway is membrane lipid metabolism; glycerophospholipid metabolism. In terms of biological role, prenyltransferase that catalyzes the transfer of the geranylgeranyl moiety of geranylgeranyl diphosphate (GGPP) to the C2 hydroxyl of (S)-3-O-geranylgeranylglyceryl phosphate (GGGP). This reaction is the second ether-bond-formation step in the biosynthesis of archaeal membrane lipids. This chain is Digeranylgeranylglyceryl phosphate synthase, found in Thermococcus gammatolerans (strain DSM 15229 / JCM 11827 / EJ3).